Reading from the N-terminus, the 660-residue chain is Glutenin, high molecular weight subunit 12 (660 aa).

Residues 1–21 (MAKRLVLFAAVVIALVALTTA) form the signal peptide. The span at 127 to 136 (YYPSVTSPRQ) shows a compositional bias: polar residues. The disordered stretch occupies residues 127-660 (YYPSVTSPRQ…EGGDALSASQ (534 aa)). 4 stretches are compositionally biased toward low complexity: residues 141–166 (PGQASPQQPGQGQQPGKWQEPGQGQQ), 187–200 (QGYYPTSLQQPGQG), 208–248 (QGYY…WQQG), and 255–275 (QQLGQGQQPGQWQQSGQGQQG). The segment covering 276–286 (HYPTSLQQPGQ) has biased composition (polar residues). Positions 296-365 (QQQPAQGQQG…QQQPGQGQQG (70 aa)) are enriched in low complexity. Positions 370 to 384 (SLQQPGQQGHYPTSL) are enriched in polar residues. Low complexity-rich tracts occupy residues 385–426 (QQLG…GQQG), 478–514 (PGQRQQPGQGQHPEQGQQPGQGQQGYYPTSPQQPGQG), 522–535 (QGYYPTSPQQPGQG), and 551–577 (QQTGQAQQLGQGQQIGQVQQPGQGQQG). Positions 590-604 (QQSGQGQQSGQGHQP) are enriched in gly residues.

The protein belongs to the gliadin/glutenin family. Disulfide-bridge linked aggregates.

Functionally, glutenins are high-molecular weight seed storage proteins of wheat endosperm. Thought to be responsible for the visco-elastic property of wheat dough. The sequence is that of Glutenin, high molecular weight subunit 12 from Triticum aestivum (Wheat).